We begin with the raw amino-acid sequence, 21 residues long: Granule-bound starch synthase 1 (21 aa).

It belongs to the glycosyltransferase 1 family. Bacterial/plant glycogen synthase subfamily.

It localises to the plastid. The protein resides in the chloroplast. Its subcellular location is the amyloplast. The catalysed reaction is an NDP-alpha-D-glucose + [(1-&gt;4)-alpha-D-glucosyl](n) = [(1-&gt;4)-alpha-D-glucosyl](n+1) + a ribonucleoside 5'-diphosphate + H(+). It participates in glycan biosynthesis; starch biosynthesis. The polypeptide is Granule-bound starch synthase 1 (Secale cereale (Rye)).